A 563-amino-acid chain; its full sequence is Quinidine resistance protein 1 (563 aa).

Over residues 1–10 the composition is skewed to polar residues; it reads MTKQQTSVMR. The segment at 1-50 is disordered; it reads MTKQQTSVMRNASIAKEEREGSDNNNVDRSSSDAISDNDAERSNSHSEID. At 1–75 the chain is on the cytoplasmic side; that stretch reads MTKQQTSVMR…KQKMLLVVQC (75 aa). The segment covering 23–33 has biased composition (low complexity); it reads DNNNVDRSSSD. Over residues 39–49 the composition is skewed to basic and acidic residues; that stretch reads DAERSNSHSEI. A helical membrane pass occupies residues 76–96; that stretch reads AFTGFFSTVAGSIYYPVLTII. Over 97 to 108 the chain is Extracellular; sequence ERKFNITEELAN. Residues 109–129 traverse the membrane as a helical segment; sequence VTIVVYFIFQGVAPSIMGGLA. Residues 130-135 are Cytoplasmic-facing; that stretch reads DTFGRR. The helical transmembrane segment at 136-156 threads the bilayer; the sequence is PIVLWAILAYFCACIGLACAH. Residues 157–165 are Extracellular-facing; it reads NYAQILALR. The helical transmembrane segment at 166–186 threads the bilayer; the sequence is CLQAAGISPVIAINSGIMGDV. Residues 187 to 195 lie on the Cytoplasmic side of the membrane; sequence TTKVERGGY. A helical transmembrane segment spans residues 196 to 216; sequence VGLVAGFQVVGTAFGALIGAG. Over 217–224 the chain is Extracellular; it reads LSSKWGWR. Residues 225 to 245 traverse the membrane as a helical segment; it reads AIFWFLAIGSGICLVFSTLLM. At 246 to 296 the chain is on the cytoplasmic side; sequence PETKRTLVGNGSVTPRSFLNRSLILHVGSVKKTLHLDDPDPETLEPRTSVD. Residues 297–317 traverse the membrane as a helical segment; the sequence is FLAPLKILHIREIDILLSIAG. The Extracellular portion of the chain corresponds to 318-341; that stretch reads LQFSTWTTHQTALTIVLSKKYNLS. Residues 342 to 362 traverse the membrane as a helical segment; the sequence is VAKIGLCFLPAGISTLTSIIS. The Cytoplasmic segment spans residues 363-421; the sequence is AGRYLNWSYRTRKVKYNRWIKEQELQLMEKYKGDKNKVAELIHSNSHYAFNLVEARLHP. A helical transmembrane segment spans residues 422–442; the sequence is AFVTLLLSSIGFTAFGWCISV. Topologically, residues 443–445 are extracellular; it reads KTP. The chain crosses the membrane as a helical span at residues 446 to 466; that stretch reads LAAVLCTSAFASLFSNCILTF. Topologically, residues 467–481 are cytoplasmic; the sequence is STTLIVDLFPSKAST. The helical transmembrane segment at 482-502 threads the bilayer; the sequence is ATGCLNLFRCLLSAIFIAALT. Residues 503 to 511 are Extracellular-facing; it reads KMVEKMRYG. A helical transmembrane segment spans residues 512–532; that stretch reads GVFTFLSAITSSSSLLLFYLL. Over 533-563 the chain is Cytoplasmic; it reads KNGKQLSFDRIRANDKSAGRSVGKNSEKVST.

This sequence belongs to the major facilitator superfamily. CAR1 family.

The protein localises to the cell membrane. Functionally, multidrug resistance transporter involved in resistance and adaptation to quinidine and ketoconazole. The sequence is that of Quinidine resistance protein 1 (QDR1) from Saccharomyces cerevisiae (strain ATCC 204508 / S288c) (Baker's yeast).